Reading from the N-terminus, the 475-residue chain is Aspartyl/glutamyl-tRNA(Asn/Gln) amidotransferase subunit B (475 aa).

It belongs to the GatB/GatE family. GatB subfamily. In terms of assembly, heterotrimer of A, B and C subunits.

It carries out the reaction L-glutamyl-tRNA(Gln) + L-glutamine + ATP + H2O = L-glutaminyl-tRNA(Gln) + L-glutamate + ADP + phosphate + H(+). The enzyme catalyses L-aspartyl-tRNA(Asn) + L-glutamine + ATP + H2O = L-asparaginyl-tRNA(Asn) + L-glutamate + ADP + phosphate + 2 H(+). Allows the formation of correctly charged Asn-tRNA(Asn) or Gln-tRNA(Gln) through the transamidation of misacylated Asp-tRNA(Asn) or Glu-tRNA(Gln) in organisms which lack either or both of asparaginyl-tRNA or glutaminyl-tRNA synthetases. The reaction takes place in the presence of glutamine and ATP through an activated phospho-Asp-tRNA(Asn) or phospho-Glu-tRNA(Gln). In Thiobacillus denitrificans (strain ATCC 25259 / T1), this protein is Aspartyl/glutamyl-tRNA(Asn/Gln) amidotransferase subunit B.